A 311-amino-acid polypeptide reads, in one-letter code: Acetyl-coenzyme A carboxylase carboxyl transferase subunit alpha (311 aa).

Residues 36-286 form the CoA carboxyltransferase C-terminal domain; it reads ELKKEVERVY…VNYFLKSLEE (251 aa).

Belongs to the AccA family. In terms of assembly, acetyl-CoA carboxylase is a heterohexamer composed of biotin carboxyl carrier protein (AccB), biotin carboxylase (AccC) and two subunits each of ACCase subunit alpha (AccA) and ACCase subunit beta (AccD).

It localises to the cytoplasm. The catalysed reaction is N(6)-carboxybiotinyl-L-lysyl-[protein] + acetyl-CoA = N(6)-biotinyl-L-lysyl-[protein] + malonyl-CoA. The protein operates within lipid metabolism; malonyl-CoA biosynthesis; malonyl-CoA from acetyl-CoA: step 1/1. Functionally, component of the acetyl coenzyme A carboxylase (ACC) complex. First, biotin carboxylase catalyzes the carboxylation of biotin on its carrier protein (BCCP) and then the CO(2) group is transferred by the carboxyltransferase to acetyl-CoA to form malonyl-CoA. This chain is Acetyl-coenzyme A carboxylase carboxyl transferase subunit alpha, found in Wolinella succinogenes (strain ATCC 29543 / DSM 1740 / CCUG 13145 / JCM 31913 / LMG 7466 / NCTC 11488 / FDC 602W) (Vibrio succinogenes).